The following is a 302-amino-acid chain: Oxygen-dependent coproporphyrinogen-III oxidase (302 aa).

Residue Ser-94 coordinates substrate. Residues His-98 and His-108 each contribute to the a divalent metal cation site. The active-site Proton donor is the His-108. 110–112 (NVR) is a binding site for substrate. A divalent metal cation contacts are provided by His-147 and His-177. Residues 242–277 (YVEFNLVYDRGTLFGLQTGGRTESILMSMPPLVRWQ) are important for dimerization. 260 to 262 (GGR) contributes to the substrate binding site.

It belongs to the aerobic coproporphyrinogen-III oxidase family. Homodimer. A divalent metal cation is required as a cofactor.

It is found in the cytoplasm. The catalysed reaction is coproporphyrinogen III + O2 + 2 H(+) = protoporphyrinogen IX + 2 CO2 + 2 H2O. Its pathway is porphyrin-containing compound metabolism; protoporphyrin-IX biosynthesis; protoporphyrinogen-IX from coproporphyrinogen-III (O2 route): step 1/1. Functionally, involved in the heme biosynthesis. Catalyzes the aerobic oxidative decarboxylation of propionate groups of rings A and B of coproporphyrinogen-III to yield the vinyl groups in protoporphyrinogen-IX. The polypeptide is Oxygen-dependent coproporphyrinogen-III oxidase (Shewanella oneidensis (strain ATCC 700550 / JCM 31522 / CIP 106686 / LMG 19005 / NCIMB 14063 / MR-1)).